A 330-amino-acid chain; its full sequence is Polyprenyl transferase ausN (330 aa).

Transmembrane regions (helical) follow at residues 116 to 136, 165 to 185, 189 to 209, 238 to 258, and 260 to 280; these read AATIFTACLFVLGCSLLLFLP, LILINIAWAIPMAMHSLGMEP, ILSMLCMCVFFSAVIVMIDLV, AYSLFAISSLALLFGGVLGGL, and VPFVLFSVGGHIVGFWRFLRA.

Belongs to the UbiA prenyltransferase family. Mg(2+) is required as a cofactor.

It localises to the membrane. The enzyme catalyses 3,5-dimethylorsellinate + (2E,6E)-farnesyl diphosphate = (3R)-3-farnesyl-6-hydroxy-2,3,5-trimethyl-4-oxocyclohexa-1,5-diene-1-carboxylate + diphosphate + H(+). It functions in the pathway secondary metabolite biosynthesis; terpenoid biosynthesis. Its function is as follows. Polyprenyl transferase; part of the gene cluster B that mediates the biosynthesis of austinol and dehydroaustinol, two fungal meroterpenoids. The first step of the pathway is the synthesis of 3,5-dimethylorsellinic acid by the polyketide synthase ausA. 3,5-dimethylorsellinic acid is then prenylated by the polyprenyl transferase ausN. Further epoxidation by the FAD-dependent monooxygenase ausM and cyclization by the probable terpene cyclase ausL lead to the formation of protoaustinoid A. Protoaustinoid A is then oxidized to spiro-lactone preaustinoid A3 by the combined action of the FAD-binding monooxygenases ausB and ausC, and the dioxygenase ausE. Acid-catalyzed keto-rearrangement and ring contraction of the tetraketide portion of preaustinoid A3 by ausJ lead to the formation of preaustinoid A4. The aldo-keto reductase ausK, with the help of ausH, is involved in the next step by transforming preaustinoid A4 into isoaustinone which is in turn hydroxylated by the P450 monooxygenase ausI to form austinolide. Finally, the cytochrome P450 monooxygenase ausG modifies austinolide to austinol. Austinol can be further modified to dehydroaustinol which forms a diffusible complex with diorcinol that initiates conidiation. Due to genetic rearrangements of the clusters and the subsequent loss of some enzymes, the end products of the Emericella nidulans austinoid biosynthesis clusters are austinol and dehydroaustinol, even if additional enzymes, such as the O-acetyltransferase ausQ and the cytochrome P450 monooxygenase ausR are still functional. This Emericella nidulans (strain FGSC A4 / ATCC 38163 / CBS 112.46 / NRRL 194 / M139) (Aspergillus nidulans) protein is Polyprenyl transferase ausN.